Consider the following 127-residue polypeptide: Small ribosomal subunit protein uS13 (127 aa).

Residues 90-127 (RRHRQGLPVRGQRTRTNARTRRGRRVTVAGKKKAPSKK) form a disordered region. A compositionally biased stretch (basic residues) spans 101–127 (QRTRTNARTRRGRRVTVAGKKKAPSKK).

It belongs to the universal ribosomal protein uS13 family. Part of the 30S ribosomal subunit. Forms a loose heterodimer with protein S19. Forms two bridges to the 50S subunit in the 70S ribosome.

In terms of biological role, located at the top of the head of the 30S subunit, it contacts several helices of the 16S rRNA. In the 70S ribosome it contacts the 23S rRNA (bridge B1a) and protein L5 of the 50S subunit (bridge B1b), connecting the 2 subunits; these bridges are implicated in subunit movement. Contacts the tRNAs in the A and P-sites. The protein is Small ribosomal subunit protein uS13 of Rippkaea orientalis (strain PCC 8801 / RF-1) (Cyanothece sp. (strain PCC 8801)).